Consider the following 146-residue polypeptide: Large ribosomal subunit protein uL13 (146 aa).

This sequence belongs to the universal ribosomal protein uL13 family. As to quaternary structure, part of the 50S ribosomal subunit.

In terms of biological role, this protein is one of the early assembly proteins of the 50S ribosomal subunit, although it is not seen to bind rRNA by itself. It is important during the early stages of 50S assembly. This chain is Large ribosomal subunit protein uL13, found in Bdellovibrio bacteriovorus (strain ATCC 15356 / DSM 50701 / NCIMB 9529 / HD100).